A 188-amino-acid chain; its full sequence is dCTP deaminase (188 aa).

Residues 111 to 116 (KSTYAR), 135 to 137 (TLE), glutamine 156, tyrosine 170, and glutamine 180 contribute to the dCTP site. Glutamate 137 functions as the Proton donor/acceptor in the catalytic mechanism.

Belongs to the dCTP deaminase family. As to quaternary structure, homotrimer.

It carries out the reaction dCTP + H2O + H(+) = dUTP + NH4(+). The protein operates within pyrimidine metabolism; dUMP biosynthesis; dUMP from dCTP (dUTP route): step 1/2. In terms of biological role, catalyzes the deamination of dCTP to dUTP. This Janthinobacterium sp. (strain Marseille) (Minibacterium massiliensis) protein is dCTP deaminase.